The sequence spans 45 residues: MFKRKSTAELAAQMAKLNGNKGFSSEDKGEWKLKLDNAGNGQAVI.

As to quaternary structure, homodimer in the absence of DNA, monomer when binding DNA.

Its function is as follows. Binds preferentially to single-stranded DNA and therefore, destabilizes double-stranded DNA. It is involved in DNA replication, repair and recombination. Binds ss-DNA as the replication fork advances and stimulates the replisome processivity and accuracy. This chain is Single-stranded DNA-binding protein (32), found in Enterobacteria phage RB3 (Bacteriophage RB3).